The sequence spans 159 residues: NADH-quinone oxidoreductase subunit B (159 aa).

Residues C36, C37, C102, and C132 each coordinate [4Fe-4S] cluster.

This sequence belongs to the complex I 20 kDa subunit family. As to quaternary structure, NDH-1 is composed of 14 different subunits. Subunits NuoB, C, D, E, F, and G constitute the peripheral sector of the complex. The cofactor is [4Fe-4S] cluster.

Its subcellular location is the cell inner membrane. It catalyses the reaction a quinone + NADH + 5 H(+)(in) = a quinol + NAD(+) + 4 H(+)(out). Functionally, NDH-1 shuttles electrons from NADH, via FMN and iron-sulfur (Fe-S) centers, to quinones in the respiratory chain. Couples the redox reaction to proton translocation (for every two electrons transferred, four hydrogen ions are translocated across the cytoplasmic membrane), and thus conserves the redox energy in a proton gradient. The polypeptide is NADH-quinone oxidoreductase subunit B (Paracidovorax citrulli (strain AAC00-1) (Acidovorax citrulli)).